The sequence spans 356 residues: UDP-N-acetylglucosamine--N-acetylmuramyl-(pentapeptide) pyrophosphoryl-undecaprenol N-acetylglucosamine transferase (356 aa).

UDP-N-acetyl-alpha-D-glucosamine is bound by residues 11–13 (TGG), Asn-117, Arg-160, Ser-188, and Gln-290.

It belongs to the glycosyltransferase 28 family. MurG subfamily.

Its subcellular location is the cell inner membrane. The enzyme catalyses di-trans,octa-cis-undecaprenyl diphospho-N-acetyl-alpha-D-muramoyl-L-alanyl-D-glutamyl-meso-2,6-diaminopimeloyl-D-alanyl-D-alanine + UDP-N-acetyl-alpha-D-glucosamine = di-trans,octa-cis-undecaprenyl diphospho-[N-acetyl-alpha-D-glucosaminyl-(1-&gt;4)]-N-acetyl-alpha-D-muramoyl-L-alanyl-D-glutamyl-meso-2,6-diaminopimeloyl-D-alanyl-D-alanine + UDP + H(+). It functions in the pathway cell wall biogenesis; peptidoglycan biosynthesis. In terms of biological role, cell wall formation. Catalyzes the transfer of a GlcNAc subunit on undecaprenyl-pyrophosphoryl-MurNAc-pentapeptide (lipid intermediate I) to form undecaprenyl-pyrophosphoryl-MurNAc-(pentapeptide)GlcNAc (lipid intermediate II). The sequence is that of UDP-N-acetylglucosamine--N-acetylmuramyl-(pentapeptide) pyrophosphoryl-undecaprenol N-acetylglucosamine transferase from Rickettsia bellii (strain RML369-C).